The following is a 264-amino-acid chain: Thymidylate synthase (264 aa).

Arginine 21 serves as a coordination point for dUMP. Histidine 51 contacts (6R)-5,10-methylene-5,6,7,8-tetrahydrofolate. Residue 126–127 (RR) participates in dUMP binding. Cysteine 146 (nucleophile) is an active-site residue. Residues 166 to 169 (RSAD), asparagine 177, and 207 to 209 (HIY) contribute to the dUMP site. A (6R)-5,10-methylene-5,6,7,8-tetrahydrofolate-binding site is contributed by aspartate 169. Alanine 263 is a binding site for (6R)-5,10-methylene-5,6,7,8-tetrahydrofolate.

This sequence belongs to the thymidylate synthase family. Bacterial-type ThyA subfamily. As to quaternary structure, homodimer.

The protein resides in the cytoplasm. The enzyme catalyses dUMP + (6R)-5,10-methylene-5,6,7,8-tetrahydrofolate = 7,8-dihydrofolate + dTMP. The protein operates within pyrimidine metabolism; dTTP biosynthesis. Its function is as follows. Catalyzes the reductive methylation of 2'-deoxyuridine-5'-monophosphate (dUMP) to 2'-deoxythymidine-5'-monophosphate (dTMP) while utilizing 5,10-methylenetetrahydrofolate (mTHF) as the methyl donor and reductant in the reaction, yielding dihydrofolate (DHF) as a by-product. This enzymatic reaction provides an intracellular de novo source of dTMP, an essential precursor for DNA biosynthesis. This Brucella ovis (strain ATCC 25840 / 63/290 / NCTC 10512) protein is Thymidylate synthase.